The sequence spans 361 residues: Chorismate synthase (361 aa).

Residues Arg48 and Arg54 each contribute to the NADP(+) site. FMN contacts are provided by residues 125 to 127 (RSS), 238 to 239 (NA), Gly278, 293 to 297 (KPTSS), and Arg319.

Belongs to the chorismate synthase family. Homotetramer. It depends on FMNH2 as a cofactor.

The enzyme catalyses 5-O-(1-carboxyvinyl)-3-phosphoshikimate = chorismate + phosphate. The protein operates within metabolic intermediate biosynthesis; chorismate biosynthesis; chorismate from D-erythrose 4-phosphate and phosphoenolpyruvate: step 7/7. Functionally, catalyzes the anti-1,4-elimination of the C-3 phosphate and the C-6 proR hydrogen from 5-enolpyruvylshikimate-3-phosphate (EPSP) to yield chorismate, which is the branch point compound that serves as the starting substrate for the three terminal pathways of aromatic amino acid biosynthesis. This reaction introduces a second double bond into the aromatic ring system. This is Chorismate synthase from Edwardsiella ictaluri (strain 93-146).